The primary structure comprises 86 residues: Selenoprotein W (86 aa).

The segment at residues 10–13 (CGGU) is a cross-link (cysteinyl-selenocysteine (Cys-Sec); redox-active). A non-standard amino acid (selenocysteine) is located at residue Sec-13.

Belongs to the SelWTH family. Selenoprotein W subfamily.

It localises to the cytoplasm. Its function is as follows. Plays a role as a glutathione (GSH)-dependent antioxidant. May be involved in a redox-related process. May play a role in the myopathies of selenium deficiency. The protein is Selenoprotein W of Danio rerio (Zebrafish).